Consider the following 436-residue polypeptide: Cold sensitive U2 snRNA suppressor 1 (436 aa).

Positions M1–S10 are enriched in basic residues. Positions M1–N22 are disordered. The segment covering N12 to N22 has biased composition (low complexity). Phosphothreonine occurs at positions 104 and 112. Residue S114 is modified to Phosphoserine. Residues E374–K436 form a disordered region. Positions G389–E408 are enriched in basic and acidic residues.

It to mammalian SAP 145. Some, to C.elegans ZK632.11. As to quaternary structure, belongs to the CWC complex (or CEF1-associated complex), a spliceosome sub-complex reminiscent of a late-stage spliceosome composed of the U2, U5 and U6 snRNAs and at least BUD13, BUD31, BRR2, CDC40, CEF1, CLF1, CUS1, CWC2, CWC15, CWC21, CWC22, CWC23, CWC24, CWC25, CWC27, ECM2, HSH155, IST3, ISY1, LEA1, MSL1, NTC20, PRP8, PRP9, PRP11, PRP19, PRP21, PRP22, PRP45, PRP46, SLU7, SMB1, SMD1, SMD2, SMD3, SMX2, SMX3, SNT309, SNU114, SPP2, SYF1, SYF2, RSE1 and YJU2. Interacts with RDS3.

The protein resides in the nucleus. Essential splicing protein required for U2 snRNP binding to pre-mRNA during spliceosome assembly. The protein is Cold sensitive U2 snRNA suppressor 1 (CUS1) of Saccharomyces cerevisiae (strain ATCC 204508 / S288c) (Baker's yeast).